The primary structure comprises 819 residues: uncharacterized protein (819 aa).

Ser16 is modified (phosphoserine). Disordered stretches follow at residues 28–83 (SNTQ…PPTV) and 96–134 (PTFT…ASKI). Residues 36–63 (KIRFTENENDLSPERAQKEPVSIPHGRY) constitute a DNA-binding region (zn(2)-C6 fungal-type). Polar residues-rich tracts occupy residues 64-77 (TWST…SHLP) and 96-118 (PTFT…NDYI).

The protein resides in the nucleus. This is an uncharacterized protein from Schizosaccharomyces pombe (strain 972 / ATCC 24843) (Fission yeast).